A 1113-amino-acid polypeptide reads, in one-letter code: Histone deacetylase 5 (1113 aa).

The segment at 1 to 22 is disordered; it reads MNSPNESDGMSGREPSLGILPR. Residue Lys35 forms a Glycyl lysine isopeptide (Lys-Gly) (interchain with G-Cter in SUMO2) linkage. Disordered regions lie at residues 39–63 and 187–272; these read PGAM…RGAL and KEPT…SSPL. Basic and acidic residues predominate over residues 238-249; sequence DSRDDFPLRKTA. The residue at position 250 (Ser250) is a Phosphoserine; by AMPK, CaMK1, SIK1 and PKD/PRKD1. Positions 263-272 are enriched in basic and acidic residues; that stretch reads KVAERRSSPL. Position 283 is a phosphothreonine; by PKC (Thr283). The tract at residues 472–494 is disordered; it reads RTVGKLPRHRPLSRTQSSPLPQS. A compositionally biased stretch (low complexity) spans 484 to 494; that stretch reads SRTQSSPLPQS. Phosphoserine; by AMPK, CaMK1, SIK1 and PKD/PRKD1 is present on Ser488. Lys523 is subject to N6-acetyllysine. The interval 526–611 is disordered; the sequence is TKTGELSRQP…PDEGPDLEES (86 aa). Over residues 571-610 the composition is skewed to acidic residues; the sequence is STQEDLEEEEEEEEEEEEDCIQVKDEDGESGPDEGPDLEE. Ser600 and Ser650 each carry phosphoserine. The histone deacetylase stretch occupies residues 675-1019; it reads GVVYDTFMLK…VSALLSVELQ (345 aa). The Zn(2+) site is built by Cys687, Cys689, His695, and Cys772. His824 is an active-site residue. The Nuclear export signal signature appears at 1072-1113; sequence EEAETVSAMALLSVGAEQAQAVATQEHSPRPAEEPMEQEPAL. The segment at 1088-1113 is disordered; the sequence is EQAQAVATQEHSPRPAEEPMEQEPAL. Ser1099 carries the post-translational modification Phosphoserine.

Belongs to the histone deacetylase family. HD type 2 subfamily. In terms of assembly, interacts with AHRR, BAHD1, BCOR, HDAC7, HDAC9, CTBP1, MEF2C, NCOR2, NRIP1, PHB2 and a 14-3-3 chaperone protein. Interacts with BCL6, DDIT3/CHOP, GRK5, KDM5B and MYOCD. Interacts with EP300 in the presence of TFAP2C. Interacts with ANKRA2. Interacts with CUL7 (as part of the 3M complex); negatively regulated by ANKRA2. Interacts with ZBTB7B; the interaction allows the recruitment of HDAC4 on CD8 loci for deacetylation and possible inhibition of CD8 genes expression. Interacts with RARA. Phosphorylated by AMPK, CaMK1, SIK1 and PRKD1 at Ser-250 and Ser-488. The phosphorylation is required for the export to the cytoplasm and inhibition. Phosphorylated by the PKC kinases PKN1 and PKN2, impairing nuclear import. Phosphorylated by GRK5, leading to nuclear export of HDAC5 and allowing MEF2-mediated transcription. Post-translationally, ubiquitinated. Polyubiquitination however does not lead to its degradation.

Its subcellular location is the nucleus. It is found in the cytoplasm. It carries out the reaction N(6)-acetyl-L-lysyl-[histone] + H2O = L-lysyl-[histone] + acetate. Functionally, responsible for the deacetylation of lysine residues on the N-terminal part of the core histones (H2A, H2B, H3 and H4). Histone deacetylation gives a tag for epigenetic repression and plays an important role in transcriptional regulation, cell cycle progression and developmental events. Histone deacetylases act via the formation of large multiprotein complexes. Involved in muscle maturation by repressing transcription of myocyte enhancer MEF2C. During muscle differentiation, it shuttles into the cytoplasm, allowing the expression of myocyte enhancer factors. Serves as a corepressor of RARA and causes its deacetylation. In association with RARA, plays a role in the repression of microRNA-10a and thereby in the inflammatory response. The sequence is that of Histone deacetylase 5 (Hdac5) from Mus musculus (Mouse).